The sequence spans 164 residues: MRYNEKELQALSRQPAEMAAELGMRGPKKGSVAKRRLVKLVVNFLFYFRPDEAEPLGALLLERCRVAQEEPGGFSISFVEDLSRKYHFECCSQEQCQDWMEALQRASYEYMRQSLIFYRNEIRKMTGKDPLEQFGISEEARFQLNSLPKDGRTTCIGSQLNVLD.

Positions proline 15–tyrosine 108 constitute a PH domain.

This is Pleckstrin homology domain-containing family J member 1 (Plekhj1) from Mus musculus (Mouse).